Reading from the N-terminus, the 86-residue chain is Small ribosomal subunit protein bS20 (86 aa).

A disordered region spans residues 1 to 22 (MANIASARKRARQAEKNRQHNM).

This sequence belongs to the bacterial ribosomal protein bS20 family.

In terms of biological role, binds directly to 16S ribosomal RNA. The chain is Small ribosomal subunit protein bS20 from Thioalkalivibrio sulfidiphilus (strain HL-EbGR7).